A 176-amino-acid chain; its full sequence is Isopentenyl-diphosphate Delta-isomerase (176 aa).

Mn(2+) is bound by residues His-22 and His-28. The 135-residue stretch at 26-160 (LRHKAISVFI…PETFTPWLHI (135 aa)) folds into the Nudix hydrolase domain. Cys-62 is an active-site residue. Mn(2+) is bound at residue His-64. Glu-82 contacts Mg(2+). Residues Glu-108 and Glu-110 each contribute to the Mn(2+) site. Glu-110 is a catalytic residue.

It belongs to the IPP isomerase type 1 family. Mg(2+) is required as a cofactor. The cofactor is Mn(2+).

Its subcellular location is the cytoplasm. The enzyme catalyses isopentenyl diphosphate = dimethylallyl diphosphate. It participates in isoprenoid biosynthesis; dimethylallyl diphosphate biosynthesis; dimethylallyl diphosphate from isopentenyl diphosphate: step 1/1. It functions in the pathway porphyrin-containing compound metabolism; chlorophyll biosynthesis. In terms of biological role, catalyzes the 1,3-allylic rearrangement of the homoallylic substrate isopentenyl (IPP) to its highly electrophilic allylic isomer, dimethylallyl diphosphate (DMAPP). The chain is Isopentenyl-diphosphate Delta-isomerase from Jannaschia sp. (strain CCS1).